We begin with the raw amino-acid sequence, 199 residues long: Adenylate kinase (199 aa).

8-13 (GAGKGT) is an ATP binding site. The segment at 28–57 (STGDIFRANIKNKTELGQQVKAIVDAGDYV) is NMP. AMP contacts are provided by residues threonine 29, arginine 34, 55–57 (DYV), 83–86 (GYPR), and glutamine 90. The interval 124–134 (KRAREQGRADD) is LID. Arginine 125 is an ATP binding site. The AMP site is built by arginine 131 and arginine 142. Residue glycine 170 participates in ATP binding.

It belongs to the adenylate kinase family. Monomer.

The protein resides in the cytoplasm. The enzyme catalyses AMP + ATP = 2 ADP. Its pathway is purine metabolism; AMP biosynthesis via salvage pathway; AMP from ADP: step 1/1. In terms of biological role, catalyzes the reversible transfer of the terminal phosphate group between ATP and AMP. Plays an important role in cellular energy homeostasis and in adenine nucleotide metabolism. This Leifsonia xyli subsp. xyli (strain CTCB07) protein is Adenylate kinase.